Here is a 360-residue protein sequence, read N- to C-terminus: Chorismate synthase (360 aa).

Positions 48 and 54 each coordinate NADP(+). Residues Arg-125–Ser-127, Asn-246–Ala-247, Gly-286, Lys-301–Ser-305, and Arg-327 each bind FMN.

The protein belongs to the chorismate synthase family. In terms of assembly, homotetramer. It depends on FMNH2 as a cofactor.

It catalyses the reaction 5-O-(1-carboxyvinyl)-3-phosphoshikimate = chorismate + phosphate. Its pathway is metabolic intermediate biosynthesis; chorismate biosynthesis; chorismate from D-erythrose 4-phosphate and phosphoenolpyruvate: step 7/7. In terms of biological role, catalyzes the anti-1,4-elimination of the C-3 phosphate and the C-6 proR hydrogen from 5-enolpyruvylshikimate-3-phosphate (EPSP) to yield chorismate, which is the branch point compound that serves as the starting substrate for the three terminal pathways of aromatic amino acid biosynthesis. This reaction introduces a second double bond into the aromatic ring system. This Actinobacillus pleuropneumoniae serotype 7 (strain AP76) protein is Chorismate synthase.